Here is a 374-residue protein sequence, read N- to C-terminus: Double homeobox protein 4C (374 aa).

Over residues 1-10 (MALPTPSDST) the composition is skewed to polar residues. 3 disordered regions span residues 1–24 (MALP…RRRL), 72–102 (SRQL…TAVT), and 218–374 (LQPS…YELL). DNA-binding regions (homeobox) lie at residues 19-78 (GRRR…LRQH) and 94-153 (GRRK…PGQG). Positions 265–274 (KSREDRDPQR) are enriched in basic and acidic residues. Low complexity-rich tracts occupy residues 278–302 (PGPC…LAPP) and 319–329 (AGAAWEPQAGA). Positions 354–374 (QPLQEPGRSSTVTSSLLYELL) are enriched in polar residues.

In terms of assembly, may interact with MYF5; regulates MYF5 expression. Expressed in muscles, as well as in primary myoblasts and myotubes (at protein level).

It localises to the nucleus. The protein localises to the cytoplasm. In terms of biological role, down-regulates MYOD1 expression and may up-regulate MYF5 expression. May regulate microRNA (miRNA) transcription, up-regulating the expression of some myogenic miRNAs, including MIR1-1, MIR133A2, MIR133B and MIR206. Impairs the differentiation of myoblasts and may be involved in muscle regeneration. Reduces DUX4-induced nuclear localization of CTNNB1/beta-catenin and its subsequent activation of target genes. The sequence is that of Double homeobox protein 4C (DUX4L9) from Homo sapiens (Human).